Here is a 127-residue protein sequence, read N- to C-terminus: uncharacterized protein (127 aa).

The protein localises to the mitochondrion. This is an uncharacterized protein from Arabidopsis thaliana (Mouse-ear cress).